Here is a 677-residue protein sequence, read N- to C-terminus: Sulfate transporter 2.1 (677 aa).

The Cytoplasmic segment spans residues 1 to 118 (MKERDSESFE…NYKLTMFKND (118 aa)). A disordered region spans residues 23-54 (STHMIQMAMANSGSSAAAQAGQDQPDRSKWLL). The span at 28 to 44 (QMAMANSGSSAAAQAGQ) shows a compositional bias: low complexity. The helical transmembrane segment at 119–139 (LMAGLTLASLCIPQSIGYATL) threads the bilayer. Residues 140–141 (AK) are Extracellular-facing. The helical transmembrane segment at 142–162 (LDPQYGLYTSVVPPLIYALMG) threads the bilayer. The Cytoplasmic portion of the chain corresponds to 163–166 (TSRE). Residues 167–187 (IAIGPVAVVSLLISSMLQKLI) form a helical membrane-spanning segment. Residues 188-198 (DPETDPLGYKK) are Extracellular-facing. Residues 199–219 (LVLTTTFFAGIFQASFGLFRL) traverse the membrane as a helical segment. Over 220–221 (GF) the chain is Cytoplasmic. A helical transmembrane segment spans residues 222 to 242 (LVDFLSHAAIVGFMGGAAIVI). The Extracellular segment spans residues 243–278 (GLQQLKGLLGITNFTTNTDIVSVLRAVWRSCQQQWS). N-linked (GlcNAc...) asparagine glycosylation occurs at N255. A helical membrane pass occupies residues 279–299 (PHTFILGCSFLSFILITRFIG). At 300–304 (KKYKK) the chain is on the cytoplasmic side. Residues 305–325 (LFWLPAIAPLIAVVVSTLMVF) traverse the membrane as a helical segment. The Extracellular segment spans residues 326-360 (LTKADEHGVKTVRHIKGGLNPMSIQDLDFNTPHLG). Residues 361–381 (QIAKIGLIIAIVALTEAIAVG) form a helical membrane-spanning segment. Residues 382–397 (RSFAGIKGYRLDGNKE) lie on the Cytoplasmic side of the membrane. A helical membrane pass occupies residues 398 to 418 (MVAIGFMNVLGSFTSCYAATG). The Extracellular segment spans residues 419 to 426 (SFSRTAVN). A helical membrane pass occupies residues 427–447 (FAAGCETAMSNIVMAVTVFVA). At 448-454 (LECLTRL) the chain is on the cytoplasmic side. Residues 455 to 475 (LYYTPIAILASIILSALPGLI) traverse the membrane as a helical segment. Residues 476–490 (NINEAIHIWKVDKFD) lie on the Extracellular side of the membrane. Residues 491–511 (FLALIGAFFGVLFASVEIGLL) form a helical membrane-spanning segment. Over 512-677 (VAVVISFAKI…ALDACFGLKV (166 aa)) the chain is Cytoplasmic. The STAS domain maps to 548–672 (YPMTVKTPGV…LTIGEALDAC (125 aa)).

The protein belongs to the SLC26A/SulP transporter (TC 2.A.53) family. As to expression, expressed in root cap, central cylinder of roots and in vascular tissues of leaves.

The protein resides in the membrane. Low-affinity H(+)/sulfate cotransporter that may be involved in root-to-shoot translocation of sulfate. Plays a central role in the regulation of sulfate assimilation. The sequence is that of Sulfate transporter 2.1 (SULTR2;1) from Arabidopsis thaliana (Mouse-ear cress).